The chain runs to 310 residues: Putative HTH-type transcriptional regulatory protein LS215_1371 (310 aa).

An HTH cro/C1-type domain is found at 125 to 180 (LKHKREEMGYSIGDVAKFLGVSRKAIYDYEKGDSDVSLEVAEKLIDLFGDDIIGDV). Residues 136 to 155 (IGDVAKFLGVSRKAIYDYEK) constitute a DNA-binding region (H-T-H motif).

The chain is Putative HTH-type transcriptional regulatory protein LS215_1371 from Saccharolobus islandicus (strain L.S.2.15 / Lassen #1) (Sulfolobus islandicus).